A 329-amino-acid polypeptide reads, in one-letter code: Secretory carrier-associated membrane protein 2 (329 aa).

The disordered stretch occupies residues 1 to 74; sequence MSAFDTNPFA…PSVEPAQPTP (74 aa). Over 1 to 153 the chain is Cytoplasmic; the sequence is MSAFDTNPFA…DYQRICKMLY (153 aa). 2 stretches are compositionally biased toward polar residues: residues 19 to 31 and 40 to 51; these read QDPS…NAPQ and FSETNAATTVPA. The helical transmembrane segment at 154–174 threads the bilayer; it reads YLWMLHSVTLFLNLLACLAWF. Residues 175–181 lie on the Lumenal side of the membrane; sequence TSDAANG. The helical transmembrane segment at 182-202 threads the bilayer; the sequence is TAFGLSILWFLIFTPCAFLCW. Over 203–218 the chain is Cytoplasmic; that stretch reads YRPIYKAFRSDNSFSF. An interaction with SLC9A7 region spans residues 203-218; that stretch reads YRPIYKAFRSDNSFSF. Residues 219–239 form a helical membrane-spanning segment; that stretch reads FVFFFVFFCQIGIYFIQLIGL. Topologically, residues 240–262 are lumenal; sequence PNLGTSGWLAALSTMKNGPLAVT. Residues 263-283 form a helical membrane-spanning segment; the sequence is IIMMVVAGFFTLCAGLSLFLL. Topologically, residues 284–329 are cytoplasmic; sequence QRVHAFYRRTGASFQQAQEEFSQGIFSSRTFRGAASSAARGAFQGN. A phosphoserine mark is found at S319 and S320.

Belongs to the SCAMP family. Interacts with SLC6A4 and SLC9A7. Interacts with SLC9A5; this interaction regulates SLC9A5 cell-surface targeting and SLC9A5 activity.

Its subcellular location is the golgi apparatus. It localises to the trans-Golgi network membrane. The protein localises to the recycling endosome membrane. In terms of biological role, functions in post-Golgi recycling pathways. Acts as a recycling carrier to the cell surface. This is Secretory carrier-associated membrane protein 2 (Scamp2) from Mus musculus (Mouse).